The primary structure comprises 252 residues: Ciliogenesis and planar polarity effector 2 (252 aa).

The interval 46–252 is small GTPase-like; the sequence is QMNVDLVRYK…LRETSSEIIV (207 aa). GTP contacts are provided by residues 62 to 67 and 173 to 176; these read TGVGKS and TKFD.

It belongs to the small GTPase superfamily. Rab family.

The protein localises to the cytoplasm. It is found in the cytoskeleton. It localises to the cilium basal body. In terms of biological role, potential effector of the planar cell polarity signaling pathway. Plays a role in targeted membrane trafficking most probably at the level of vesicle fusion with membranes. Involved in cilium biogenesis by regulating the transport of cargo proteins to the basal body and to the apical tips of cilia. More generally involved in exocytosis in secretory cells. The protein is Ciliogenesis and planar polarity effector 2 (cplane2) of Danio rerio (Zebrafish).